A 174-amino-acid chain; its full sequence is Secreted cysteine-rich protein UMAG_00792 (174 aa).

A signal peptide spans 1 to 26; sequence MVSFKSSSLFLHSLSALLVLTTLSSA. An N-linked (GlcNAc...) asparagine glycan is attached at Asn-77.

As to quaternary structure, secreted cysteine-rich proteins (SCRPs) are predicted to form amyloids.

It is found in the secreted. Its function is as follows. Secreted cysteine-rich protein that might form amyloid strutures which are involved in attachment to hydrophobic surfaces and in formation of hydrophobic aerial hyphae. The sequence is that of Secreted cysteine-rich protein UMAG_00792 from Mycosarcoma maydis (Corn smut fungus).